Consider the following 292-residue polypeptide: Cyclin-dependent kinase A-2 (292 aa).

The region spanning 4 to 286 (YEKVEKIGEG…ARAALEHEYF (283 aa)) is the Protein kinase domain. Residues 10–18 (IGEGTYGVV) and Lys-33 each bind ATP. Thr-14 carries the phosphothreonine modification. Tyr-15 carries the post-translational modification Phosphotyrosine. Catalysis depends on Asp-126, which acts as the Proton acceptor. Thr-160 carries the post-translational modification Phosphothreonine.

It belongs to the protein kinase superfamily. CMGC Ser/Thr protein kinase family. CDC2/CDKX subfamily. Expressed in the dividing region of the root apex and in differentiated cells such as those in the sclerenchyma, pericycle and parenchyma of the central cylinder. Expressed in the intercalary meristem and the elongation zone of internodes.

The enzyme catalyses L-seryl-[protein] + ATP = O-phospho-L-seryl-[protein] + ADP + H(+). It carries out the reaction L-threonyl-[protein] + ATP = O-phospho-L-threonyl-[protein] + ADP + H(+). It catalyses the reaction [DNA-directed RNA polymerase] + ATP = phospho-[DNA-directed RNA polymerase] + ADP + H(+). This Oryza sativa subsp. japonica (Rice) protein is Cyclin-dependent kinase A-2 (CDKA-2).